A 369-amino-acid chain; its full sequence is Histidinol-phosphate aminotransferase 2 (369 aa).

An N6-(pyridoxal phosphate)lysine modification is found at Lys-231.

This sequence belongs to the class-II pyridoxal-phosphate-dependent aminotransferase family. Histidinol-phosphate aminotransferase subfamily. As to quaternary structure, homodimer. Pyridoxal 5'-phosphate serves as cofactor.

The enzyme catalyses L-histidinol phosphate + 2-oxoglutarate = 3-(imidazol-4-yl)-2-oxopropyl phosphate + L-glutamate. It participates in amino-acid biosynthesis; L-histidine biosynthesis; L-histidine from 5-phospho-alpha-D-ribose 1-diphosphate: step 7/9. The chain is Histidinol-phosphate aminotransferase 2 from Legionella pneumophila (strain Paris).